The following is a 377-amino-acid chain: Chaperone protein DnaJ (377 aa).

The region spanning 5 to 69 is the J domain; it reads DYYEVLGISK…QKRAQYDQYG (65 aa). The CR-type zinc-finger motif lies at 134 to 216; it reads GKDAEIEIPR…CHGKGRVTKT (83 aa). Zn(2+) is bound by residues cysteine 147, cysteine 150, cysteine 164, cysteine 167, cysteine 190, cysteine 193, cysteine 204, and cysteine 207. 4 CXXCXGXG motif repeats span residues 147–154, 164–171, 190–197, and 204–211; these read CDTCHGSG, CSHCGGKG, CQYCNGTG, and CPTCHGKG.

The protein belongs to the DnaJ family. In terms of assembly, homodimer. It depends on Zn(2+) as a cofactor.

It is found in the cytoplasm. Functionally, participates actively in the response to hyperosmotic and heat shock by preventing the aggregation of stress-denatured proteins and by disaggregating proteins, also in an autonomous, DnaK-independent fashion. Unfolded proteins bind initially to DnaJ; upon interaction with the DnaJ-bound protein, DnaK hydrolyzes its bound ATP, resulting in the formation of a stable complex. GrpE releases ADP from DnaK; ATP binding to DnaK triggers the release of the substrate protein, thus completing the reaction cycle. Several rounds of ATP-dependent interactions between DnaJ, DnaK and GrpE are required for fully efficient folding. Also involved, together with DnaK and GrpE, in the DNA replication of plasmids through activation of initiation proteins. The polypeptide is Chaperone protein DnaJ (Listeria monocytogenes serotype 1/2a (strain 10403S)).